A 346-amino-acid polypeptide reads, in one-letter code: L-glyceraldehyde 3-phosphate reductase (346 aa).

Trp-33, Asp-61, Tyr-66, Ser-168, Gln-193, Thr-223, Leu-225, Gln-227, Lys-233, Ser-303, Gln-307, and Asn-311 together coordinate NADP(+).

It belongs to the shaker potassium channel beta subunit family. As to quaternary structure, homotetramer. Homooctamer.

It carries out the reaction a primary alcohol + NADP(+) = an aldehyde + NADPH + H(+). It catalyses the reaction hydroxyacetone + NADP(+) = methylglyoxal + NADPH + H(+). In terms of biological role, aldo-keto reductase that catalyzes the stereospecific, NADPH-dependent reduction of L-glyceraldehyde 3-phosphate (L-GAP) to L-glycerol 3-phosphate (L-G3P). The physiological role of Gpr is the detoxification of L-GAP, which may be formed via non-enzymatic and/or enzymatic racemization of D-GAP. Also contributes to cellular methylglyoxal detoxification by catalyzing the NADPH-dependent conversion of methylglyoxal to acetol. However, the catalytic efficiency of methylglyoxal reductase activity is more than 2 orders of magnitude lower than the L-GAP reductase activity. In addition, exhibits activity with glyoxal and probably plays a significant role in detoxification of glyoxal in vivo. Shows broad specificity and can use aromatic aldehydes such as 4-nitrobenzaldehyde and benzaldehyde, D,L-glyceraldehyde, phenylglyoxal, isatin and the model substrate 4-nitrobenzaldehyde. In Escherichia coli (strain K12), this protein is L-glyceraldehyde 3-phosphate reductase.